The chain runs to 1019 residues: MNSELSQDLGASAARQEHLRDVVEHAGHLLPAQGPIGVFVHHNTLHAFQHLPFHDALAAASAIFEAEPYLSEADYRAHIASGRIGDEDLEAALAGRFAAQPDERRGPLSRREIERLALRHPIEAETAAGLLWRISEAGETRRLRADVPDERRRRMVQSTERWLEARPEIAARLLDRAGRDPEARAALALWDACRAVPLPPAPPLEPPLVERVGEGRSHRDLLVELAGEDPAELIDPLMIRFLGAYLDEGIAHWTMPDRAKGLWRCFRDMALEGSRLAAPAFVGLDAELRRFDAEALSPPAIAVRALEELSVAEDHWDVYVTRVLLELPGWAGMIHRLEHTPSDRPPGSPPVSLVEYLAARLTLARYALRDVARRRLGYRGPLAGLVEHARRAARPPAPPSSSPDHARPFRLFQLAQLAGLSAAEIEPLSKAERVWALEALEAFDEITRRRVLHEAYEHHHRTEVLHGIAANLRRPEEERSVEAPRFQVAFCIDDRCEGLRRHFEELSPRHETFGVAGFFGVPIRYRGLDDAGHVSLCPVGVEPAHEIVERPHEEEAGWRRKARRKRWARFLHALGRGTRTLARGVLLTPTLGLLSTVPLVGRTLFPRAAARLRRALERRLLPPVPTRLHSPRDEGSAAGGEGQPFTAAAKAARVAATLENMGLTRGFAPIVVVLGHGATSVNNPHQSAYDCGACGGRHGGPNARLFAAMANDSEVRVLLAARGIDIPDGTFFLGGMNNTTTDEIVLYDQHLVPSSHRGELSALIGALDAARQQHAHERCRRFASAPREGDAARALAHVEARAADLSEARPELGHVTNAVCVVGRRSLTRGLFLDRRAFLVSYDPIQDQGGAILERVLLAVGPVGAGINLEYYFSCVDNRRYGAGTKLPHNLASLLGVMEGSLSDLRTGLPKQMIEIHEPVRLLVVVEASTDTAAALYARQPALRELIGNGWIQLACVDPATRRIACFTGDGFAPFSPPDQPLPAVQRSADWYAGRSGFVPPALIRAASTRPREVVDHAV.

Zn(2+) is bound by residues Cys491 and Asp493. The disordered stretch occupies residues 624–643 (VPTRLHSPRDEGSAAGGEGQ). 2 residues coordinate Zn(2+): His676 and Cys691.

Belongs to the inorganic carbon transporter (TC 9.A.2) DabA family. In terms of assembly, forms a complex with DabB. It depends on Zn(2+) as a cofactor.

It is found in the cell inner membrane. In terms of biological role, part of an energy-coupled inorganic carbon pump. The chain is Probable inorganic carbon transporter subunit DabA 1 from Sorangium cellulosum (strain So ce56) (Polyangium cellulosum (strain So ce56)).